Here is an 874-residue protein sequence, read N- to C-terminus: Leucine--tRNA ligase (874 aa).

Positions 47–57 match the 'HIGH' region motif; sequence PYPSGKLHMGH. The 'KMSKS' region motif lies at 636–640; the sequence is KMSKS. Position 639 (lysine 639) interacts with ATP.

Belongs to the class-I aminoacyl-tRNA synthetase family.

It is found in the cytoplasm. The enzyme catalyses tRNA(Leu) + L-leucine + ATP = L-leucyl-tRNA(Leu) + AMP + diphosphate. The chain is Leucine--tRNA ligase from Acinetobacter baumannii (strain SDF).